The sequence spans 532 residues: Apolipoprotein N-acyltransferase (532 aa).

The next 6 helical transmembrane spans lie at Ile-37 to Ala-57, Trp-75 to Val-95, Leu-106 to Ala-126, Leu-128 to Glu-148, Val-179 to Leu-199, and Thr-207 to Leu-227. A CN hydrolase domain is found at Val-245–Ser-494. Glu-289 functions as the Proton acceptor in the catalytic mechanism. Lys-353 is an active-site residue. Cys-406 serves as the catalytic Nucleophile. The chain crosses the membrane as a helical span at residues Gly-505–Leu-525.

It belongs to the CN hydrolase family. Apolipoprotein N-acyltransferase subfamily.

It is found in the cell inner membrane. It catalyses the reaction N-terminal S-1,2-diacyl-sn-glyceryl-L-cysteinyl-[lipoprotein] + a glycerophospholipid = N-acyl-S-1,2-diacyl-sn-glyceryl-L-cysteinyl-[lipoprotein] + a 2-acyl-sn-glycero-3-phospholipid + H(+). It functions in the pathway protein modification; lipoprotein biosynthesis (N-acyl transfer). In terms of biological role, catalyzes the phospholipid dependent N-acylation of the N-terminal cysteine of apolipoprotein, the last step in lipoprotein maturation. The sequence is that of Apolipoprotein N-acyltransferase from Brucella melitensis biotype 1 (strain ATCC 23456 / CCUG 17765 / NCTC 10094 / 16M).